The following is an 829-amino-acid chain: Periplasmic nitrate reductase (829 aa).

Positions 1–30 (MNSPRPTPPPFAAAAAGLPILVRASNLVTE) are cleaved as a signal peptide. A 4Fe-4S Mo/W bis-MGD-type domain is found at 36-92 (LVWNKAPCRFCGTGCSVMVATRDGQVVATHGDIKAEVNRGINCVKGYFLSKIMYGSD). Residues cysteine 43, cysteine 46, cysteine 50, and cysteine 78 each coordinate [4Fe-4S] cluster. Mo-bis(molybdopterin guanine dinucleotide)-binding positions include lysine 80, glutamine 147, asparagine 172, cysteine 176, 209–216 (WGSNMAEM), 240–244 (STFEH), 259–261 (QTD), methionine 370, glutamine 374, asparagine 480, 506–507 (SD), lysine 529, aspartate 556, and 716–725 (TGRVLEHWHT). Phenylalanine 792 provides a ligand contact to substrate. Residues asparagine 800 and lysine 817 each contribute to the Mo-bis(molybdopterin guanine dinucleotide) site.

It belongs to the prokaryotic molybdopterin-containing oxidoreductase family. NasA/NapA/NarB subfamily. As to quaternary structure, component of the periplasmic nitrate reductase NapAB complex composed of NapA and NapB. The cofactor is [4Fe-4S] cluster. It depends on Mo-bis(molybdopterin guanine dinucleotide) as a cofactor.

The protein localises to the periplasm. It carries out the reaction 2 Fe(II)-[cytochrome] + nitrate + 2 H(+) = 2 Fe(III)-[cytochrome] + nitrite + H2O. Functionally, catalytic subunit of the periplasmic nitrate reductase complex NapAB. Receives electrons from NapB and catalyzes the reduction of nitrate to nitrite. The polypeptide is Periplasmic nitrate reductase (Pseudomonas aeruginosa (strain ATCC 15692 / DSM 22644 / CIP 104116 / JCM 14847 / LMG 12228 / 1C / PRS 101 / PAO1)).